Reading from the N-terminus, the 376-residue chain is Protein XRP2 (376 aa).

The disordered stretch occupies residues 1–55; the sequence is MGCFFSKKSRRKSPKKDAALPTGDESATGNDLAETNNTALGSNSNQEAPKQYSWD. Residue Gly2 is the site of N-myristoyl glycine attachment. Cys3 carries S-palmitoyl cysteine lipidation. The span at 25 to 48 shows a compositional bias: polar residues; sequence ESATGNDLAETNNTALGSNSNQEA. Residues 49–204 enclose the C-CAP/cofactor C-like domain; the sequence is PKQYSWDKRE…NWSNIHDFTP (156 aa). Residues 123–124 and 140–143 contribute to the GTP site; these read GS and QQFR.

It belongs to the TBCC family. Myristoylated on Gly-2; which may be required for membrane targeting. In terms of processing, palmitoylated on Cys-3; which may be required for plasma membrane targeting. In the retina, detected in both rod and cone photoreceptors (at protein level). Has strongest expression in the retinal outer nuclear layer (ONL) and weaker expression in the outer plexiform layer (OPL) and inner plexiform layer (IPL) (at protein level). Expressed in all tissues tested.

Its subcellular location is the cell membrane. It localises to the cell projection. The protein resides in the cilium. Functionally, acts as a GTPase-activating protein (GAP) involved in trafficking between the Golgi and the ciliary membrane. Acts as a GTPase-activating protein (GAP) for tubulin in concert with tubulin-specific chaperone C, but does not enhance tubulin heterodimerization. In the retina, required for maintenance of rod and cone photoreceptor cells. May have a role in normal retinal localization of the transducins GNB1 and GNAT1, and the rhodopsin kinase GRK1. This chain is Protein XRP2, found in Danio rerio (Zebrafish).